The following is a 59-amino-acid chain: Antitoxin RelB4 (59 aa).

Residues 38–59 (VGEWLKTLGTPHQTPPPYSWRK) form a disordered region. Residues 50 to 59 (QTPPPYSWRK) are compositionally biased toward pro residues.

Its function is as follows. Antitoxin component of a type II toxin-antitoxin (TA) system. Neutralizes the effect of cognate toxin RelE4, but no other RelE or ParE toxin. The polypeptide is Antitoxin RelB4 (relB4) (Caulobacter vibrioides (strain ATCC 19089 / CIP 103742 / CB 15) (Caulobacter crescentus)).